Reading from the N-terminus, the 181-residue chain is Probable calcium-binding protein CML16 (181 aa).

A disordered region spans residues 1 to 24; that stretch reads MSNTTEKKMPQQQQVERPTALAPA. EF-hand domains lie at 23 to 58, 63 to 98, 100 to 135, and 136 to 171; these read PADA…IAPP, AGGR…GRGD, EHEA…IGEG, and CSAE…DAAA. Ca(2+) is bound by residues D36, D38, D40, R42, E47, D76, D78, D80, E87, D113, D115, D117, R119, E124, D149, D151, D153, C155, and E160.

Functionally, potential calcium sensor. The chain is Probable calcium-binding protein CML16 (CML16) from Oryza sativa subsp. japonica (Rice).